Reading from the N-terminus, the 124-residue chain is S-adenosylmethionine decarboxylase proenzyme (124 aa).

Catalysis depends on Ser-63, which acts as the Schiff-base intermediate with substrate; via pyruvic acid. Ser-63 bears the Pyruvic acid (Ser); by autocatalysis mark. Residue His-68 is the Proton acceptor; for processing activity of the active site. The active-site Proton donor; for catalytic activity is Cys-83.

Belongs to the prokaryotic AdoMetDC family. Type 1 subfamily. As to quaternary structure, heterotetramer of two alpha and two beta chains arranged as a dimer of alpha/beta heterodimers. It depends on pyruvate as a cofactor. Post-translationally, is synthesized initially as an inactive proenzyme. Formation of the active enzyme involves a self-maturation process in which the active site pyruvoyl group is generated from an internal serine residue via an autocatalytic post-translational modification. Two non-identical subunits are generated from the proenzyme in this reaction, and the pyruvate is formed at the N-terminus of the alpha chain, which is derived from the carboxyl end of the proenzyme. The post-translation cleavage follows an unusual pathway, termed non-hydrolytic serinolysis, in which the side chain hydroxyl group of the serine supplies its oxygen atom to form the C-terminus of the beta chain, while the remainder of the serine residue undergoes an oxidative deamination to produce ammonia and the pyruvoyl group blocking the N-terminus of the alpha chain.

It carries out the reaction S-adenosyl-L-methionine + H(+) = S-adenosyl 3-(methylsulfanyl)propylamine + CO2. It participates in amine and polyamine biosynthesis; S-adenosylmethioninamine biosynthesis; S-adenosylmethioninamine from S-adenosyl-L-methionine: step 1/1. In terms of biological role, catalyzes the decarboxylation of S-adenosylmethionine to S-adenosylmethioninamine (dcAdoMet), the propylamine donor required for the synthesis of the polyamines spermine and spermidine from the diamine putrescine. The polypeptide is S-adenosylmethionine decarboxylase proenzyme (Geobacillus kaustophilus (strain HTA426)).